The following is a 97-amino-acid chain: Apolipoprotein C-II (97 aa).

The signal sequence occupies residues 1 to 22 (MGSRFFLALFLVLLVLGNEVQG). The segment at 63–71 (SVDEKLRDM) is lipid binding. Positions 75–97 (SSAAMSTYAGIFTDQLLTLLKGE) are lipoprotein lipase cofactor.

The protein belongs to the apolipoprotein C2 family. Post-translationally, proapolipoprotein C-II is synthesized as a sialic acid containing glycoprotein which is subsequently desialylated prior to its proteolytic processing. Proapolipoprotein C-II, the major form found in plasma undergoes proteolytic cleavage of its N-terminal hexapeptide to generate the mature form apolipoprotein C-II, which occurs as the minor form in plasma.

The protein resides in the secreted. Functionally, component of chylomicrons, very low-density lipoproteins (VLDL), low-density lipoproteins (LDL), and high-density lipoproteins (HDL) in plasma. Plays an important role in lipoprotein metabolism as an activator of lipoprotein lipase. In Grammomys surdaster (African woodland thicket rat), this protein is Apolipoprotein C-II (Apoc2).